We begin with the raw amino-acid sequence, 214 residues long: Proteasome subunit beta type-6 (214 aa).

Residues 1–14 (MEAPEWLDNAVDLG) constitute a propeptide, removed in mature form. Thr15 (nucleophile) is an active-site residue.

The protein belongs to the peptidase T1B family. In terms of assembly, the 26S proteasome consists of a 20S proteasome core and two 19S regulatory subunits. The 20S proteasome core is composed of 28 subunits that are arranged in four stacked rings, resulting in a barrel-shaped structure. The two end rings are each formed by seven alpha subunits, and the two central rings are each formed by seven beta subunits. The catalytic chamber with the active sites is on the inside of the barrel.

It localises to the cytoplasm. The protein resides in the nucleus. The enzyme catalyses Cleavage of peptide bonds with very broad specificity.. Its function is as follows. The proteasome is a multicatalytic proteinase complex which is characterized by its ability to cleave peptides with Arg, Phe, Tyr, Leu, and Glu adjacent to the leaving group at neutral or slightly basic pH. The proteasome has an ATP-dependent proteolytic activity. This chain is Proteasome subunit beta type-6 (psmB6), found in Dictyostelium discoideum (Social amoeba).